Here is a 153-residue protein sequence, read N- to C-terminus: UPF0178 protein Ccel_2994 (153 aa).

It belongs to the UPF0178 family.

In Ruminiclostridium cellulolyticum (strain ATCC 35319 / DSM 5812 / JCM 6584 / H10) (Clostridium cellulolyticum), this protein is UPF0178 protein Ccel_2994.